We begin with the raw amino-acid sequence, 286 residues long: D-tagatose-1,6-bisphosphate aldolase subunit KbaY (286 aa).

Asp-82 functions as the Proton donor in the catalytic mechanism. Residues His-83 and His-180 each coordinate Zn(2+). Gly-181 provides a ligand contact to dihydroxyacetone phosphate. Residue His-208 participates in Zn(2+) binding. Residues 209–211 and 230–233 contribute to the dihydroxyacetone phosphate site; these read GAS and NVAT.

Belongs to the class II fructose-bisphosphate aldolase family. TagBP aldolase KbaY subfamily. In terms of assembly, homotetramer. Forms a complex with KbaZ. It depends on Zn(2+) as a cofactor.

It carries out the reaction D-tagatofuranose 1,6-bisphosphate = D-glyceraldehyde 3-phosphate + dihydroxyacetone phosphate. Its pathway is carbohydrate metabolism; D-tagatose 6-phosphate degradation; D-glyceraldehyde 3-phosphate and glycerone phosphate from D-tagatose 6-phosphate: step 2/2. Catalytic subunit of the tagatose-1,6-bisphosphate aldolase KbaYZ, which catalyzes the reversible aldol condensation of dihydroxyacetone phosphate (DHAP or glycerone-phosphate) with glyceraldehyde 3-phosphate (G3P) to produce tagatose 1,6-bisphosphate (TBP). Requires KbaZ subunit for full activity and stability. The sequence is that of D-tagatose-1,6-bisphosphate aldolase subunit KbaY from Escherichia coli O45:K1 (strain S88 / ExPEC).